Here is a 153-residue protein sequence, read N- to C-terminus: NADPH-dependent 7-cyano-7-deazaguanine reductase (153 aa).

A disordered region spans residues 1-30; the sequence is MDSIETHAKQLGQQTPLPASPEAAQLDRVP. Cysteine 51 serves as the catalytic Thioimide intermediate. The active-site Proton donor is aspartate 58. Residues 73–75 and 92–93 contribute to the substrate site; these read VES and HE.

Belongs to the GTP cyclohydrolase I family. QueF type 1 subfamily.

The protein resides in the cytoplasm. The catalysed reaction is 7-aminomethyl-7-carbaguanine + 2 NADP(+) = 7-cyano-7-deazaguanine + 2 NADPH + 3 H(+). It functions in the pathway tRNA modification; tRNA-queuosine biosynthesis. Its function is as follows. Catalyzes the NADPH-dependent reduction of 7-cyano-7-deazaguanine (preQ0) to 7-aminomethyl-7-deazaguanine (preQ1). This is NADPH-dependent 7-cyano-7-deazaguanine reductase from Methylorubrum extorquens (strain CM4 / NCIMB 13688) (Methylobacterium extorquens).